A 260-amino-acid chain; its full sequence is Large ribosomal subunit protein uL4 (260 aa).

The protein belongs to the universal ribosomal protein uL4 family. In terms of assembly, part of the 50S ribosomal subunit.

Its function is as follows. One of the primary rRNA binding proteins, this protein initially binds near the 5'-end of the 23S rRNA. It is important during the early stages of 50S assembly. It makes multiple contacts with different domains of the 23S rRNA in the assembled 50S subunit and ribosome. Functionally, forms part of the polypeptide exit tunnel. The polypeptide is Large ribosomal subunit protein uL4 (Methanopyrus kandleri (strain AV19 / DSM 6324 / JCM 9639 / NBRC 100938)).